The following is a 322-amino-acid chain: tRNA dimethylallyltransferase (322 aa).

Residue 19 to 26 (GPTASGKT) participates in ATP binding. 21–26 (TASGKT) is a substrate binding site. 3 interaction with substrate tRNA regions span residues 44-47 (DSAL), 168-172 (QRIQR), and 255-260 (RCVGYR).

The protein belongs to the IPP transferase family. As to quaternary structure, monomer. Requires Mg(2+) as cofactor.

It catalyses the reaction adenosine(37) in tRNA + dimethylallyl diphosphate = N(6)-dimethylallyladenosine(37) in tRNA + diphosphate. Catalyzes the transfer of a dimethylallyl group onto the adenine at position 37 in tRNAs that read codons beginning with uridine, leading to the formation of N6-(dimethylallyl)adenosine (i(6)A). The chain is tRNA dimethylallyltransferase from Cupriavidus necator (strain ATCC 17699 / DSM 428 / KCTC 22496 / NCIMB 10442 / H16 / Stanier 337) (Ralstonia eutropha).